We begin with the raw amino-acid sequence, 301 residues long: Glutamyl-Q tRNA(Asp) synthetase (301 aa).

Residues Arg8–Ser12 and Glu44 each bind L-glutamate. Positions Pro11–Ser21 match the 'HIGH' region motif. Positions 100, 102, 122, and 126 each coordinate Zn(2+). L-glutamate is bound by residues Tyr180 and Arg198. The 'KMSKS' region motif lies at Lys236–Gln240. Lys239 contributes to the ATP binding site.

Belongs to the class-I aminoacyl-tRNA synthetase family. GluQ subfamily. Requires Zn(2+) as cofactor.

In terms of biological role, catalyzes the tRNA-independent activation of glutamate in presence of ATP and the subsequent transfer of glutamate onto a tRNA(Asp). Glutamate is transferred on the 2-amino-5-(4,5-dihydroxy-2-cyclopenten-1-yl) moiety of the queuosine in the wobble position of the QUC anticodon. The polypeptide is Glutamyl-Q tRNA(Asp) synthetase (Dechloromonas aromatica (strain RCB)).